We begin with the raw amino-acid sequence, 277 residues long: Shikimate dehydrogenase (NADP(+)) (277 aa).

Shikimate contacts are provided by residues 18–20 and Thr65; that span reads SKS. The Proton acceptor role is filled by Lys69. Glu81 serves as a coordination point for NADP(+). The shikimate site is built by Asn90 and Asp106. Residues 130 to 134, 154 to 159, and Met217 each bind NADP(+); these read GAGGA and NRTFSK. Residue Tyr219 coordinates shikimate. Gly241 lines the NADP(+) pocket.

Belongs to the shikimate dehydrogenase family. In terms of assembly, homodimer.

It carries out the reaction shikimate + NADP(+) = 3-dehydroshikimate + NADPH + H(+). It functions in the pathway metabolic intermediate biosynthesis; chorismate biosynthesis; chorismate from D-erythrose 4-phosphate and phosphoenolpyruvate: step 4/7. Its function is as follows. Involved in the biosynthesis of the chorismate, which leads to the biosynthesis of aromatic amino acids. Catalyzes the reversible NADPH linked reduction of 3-dehydroshikimate (DHSA) to yield shikimate (SA). The protein is Shikimate dehydrogenase (NADP(+)) of Vibrio campbellii (strain ATCC BAA-1116).